A 227-amino-acid polypeptide reads, in one-letter code: Phosphoribosylformylglycinamidine synthase subunit PurQ (227 aa).

A Glutamine amidotransferase type-1 domain is found at 3–225; the sequence is FAVIVFPGSN…LKYWRETYVV (223 aa). Residue C86 is the Nucleophile of the active site. Active-site residues include H194 and E196.

In terms of assembly, part of the FGAM synthase complex composed of 1 PurL, 1 PurQ and 2 PurS subunits.

It is found in the cytoplasm. The enzyme catalyses N(2)-formyl-N(1)-(5-phospho-beta-D-ribosyl)glycinamide + L-glutamine + ATP + H2O = 2-formamido-N(1)-(5-O-phospho-beta-D-ribosyl)acetamidine + L-glutamate + ADP + phosphate + H(+). It catalyses the reaction L-glutamine + H2O = L-glutamate + NH4(+). It functions in the pathway purine metabolism; IMP biosynthesis via de novo pathway; 5-amino-1-(5-phospho-D-ribosyl)imidazole from N(2)-formyl-N(1)-(5-phospho-D-ribosyl)glycinamide: step 1/2. Functionally, part of the phosphoribosylformylglycinamidine synthase complex involved in the purines biosynthetic pathway. Catalyzes the ATP-dependent conversion of formylglycinamide ribonucleotide (FGAR) and glutamine to yield formylglycinamidine ribonucleotide (FGAM) and glutamate. The FGAM synthase complex is composed of three subunits. PurQ produces an ammonia molecule by converting glutamine to glutamate. PurL transfers the ammonia molecule to FGAR to form FGAM in an ATP-dependent manner. PurS interacts with PurQ and PurL and is thought to assist in the transfer of the ammonia molecule from PurQ to PurL. This is Phosphoribosylformylglycinamidine synthase subunit PurQ from Bacillus cytotoxicus (strain DSM 22905 / CIP 110041 / 391-98 / NVH 391-98).